Reading from the N-terminus, the 219-residue chain is Proline-rich protein 27 (219 aa).

Positions 1–15 are cleaved as a signal peptide; it reads MKLLLWACIVCVAFA. Residues 155-204 show a composition bias toward low complexity; it reads AAEPAAEAPVGAEPAAEAPVAAEPAAEAPVGVEPAAEEPSPAEPATAKPA. Positions 155 to 219 are disordered; the sequence is AAEPAAEAPV…PSPSLEQANQ (65 aa).

The protein resides in the secreted. The sequence is that of Proline-rich protein 27 (PRR27) from Homo sapiens (Human).